The chain runs to 185 residues: Elongation factor P (185 aa).

Belongs to the elongation factor P family.

Its subcellular location is the cytoplasm. Its pathway is protein biosynthesis; polypeptide chain elongation. In terms of biological role, involved in peptide bond synthesis. Stimulates efficient translation and peptide-bond synthesis on native or reconstituted 70S ribosomes in vitro. Probably functions indirectly by altering the affinity of the ribosome for aminoacyl-tRNA, thus increasing their reactivity as acceptors for peptidyl transferase. In Clostridium perfringens (strain ATCC 13124 / DSM 756 / JCM 1290 / NCIMB 6125 / NCTC 8237 / Type A), this protein is Elongation factor P.